The sequence spans 692 residues: DNA ligase (692 aa).

NAD(+) contacts are provided by residues 35–39 (DLVYD), 88–89 (SL), and E117. K119 (N6-AMP-lysine intermediate) is an active-site residue. Positions 140, 176, 301, and 325 each coordinate NAD(+). Zn(2+) is bound by residues C416, C419, C434, and C439. Positions 611 to 692 (LTNQSNSWAS…FDLIKNSKKT (82 aa)) constitute a BRCT domain.

It belongs to the NAD-dependent DNA ligase family. LigA subfamily. The cofactor is Mg(2+). Mn(2+) serves as cofactor.

It carries out the reaction NAD(+) + (deoxyribonucleotide)n-3'-hydroxyl + 5'-phospho-(deoxyribonucleotide)m = (deoxyribonucleotide)n+m + AMP + beta-nicotinamide D-nucleotide.. DNA ligase that catalyzes the formation of phosphodiester linkages between 5'-phosphoryl and 3'-hydroxyl groups in double-stranded DNA using NAD as a coenzyme and as the energy source for the reaction. It is essential for DNA replication and repair of damaged DNA. The polypeptide is DNA ligase (Mesomycoplasma hyopneumoniae (strain 232) (Mycoplasma hyopneumoniae)).